Here is a 3391-residue protein sequence, read N- to C-terminus: Genome polyprotein (3391 aa).

Residues 1–15 (MNNQRKKARNTPFNM) form an interaction with host EXOC1 region. Residues 1–101 (MNNQRKKARN…LNILNRRRRT (101 aa)) are Cytoplasmic-facing. The hydrophobic; homodimerization of capsid protein C stretch occupies residues 37–72 (MLQGRGPLKLFMALVAFLRFLTIPPTAGILKRWGTI). A propeptide spans 101–114 (TAGMIIMLIPTVMA) (ER anchor for the capsid protein C, removed in mature form by serine protease NS3). The helical transmembrane segment at 102–122 (AGMIIMLIPTVMAFHLTTRNG) threads the bilayer. The Extracellular segment spans residues 123 to 238 (EPHMIVSRQE…GAWKHAQRIE (116 aa)). N183 carries an N-linked (GlcNAc...) asparagine; by host glycan. Residues 239-259 (TWILRHPGFTIMAAILAYTIG) form a helical membrane-spanning segment. At 260–265 (TTHFQR) the chain is on the cytoplasmic side. The chain crosses the membrane as a helical span at residues 266–280 (ALIFILLTAVAPSMT). Topologically, residues 281–725 (MRCIGISNRD…LHQVFGAIYG (445 aa)) are extracellular. Cystine bridges form between C283–C310, C340–C401, C354–C385, and C372–C396. N-linked (GlcNAc...) asparagine; by host glycosylation occurs at N347. Residues 378–391 (DRGWGNGCGLFGKG) form a fusion peptide region. N433 carries N-linked (GlcNAc...) asparagine; by host glycosylation. Disulfide bonds link C465–C565 and C582–C613. A helical transmembrane segment spans residues 726–746 (AAFSGVSWIMKILIGVIITWI). Residues 747–752 (GMNSRS) lie on the Cytoplasmic side of the membrane. Residues 753-773 (TSLSVSLVLVGVVTLYLGVMV) form a helical membrane-spanning segment. Over 774–1195 (QADSGCVVSW…MVGATMTDDI (422 aa)) the chain is Extracellular. Cystine bridges form between C779-C790, C830-C918, C954-C998, C1055-C1104, C1066-C1088, and C1087-C1091. N-linked (GlcNAc...) asparagine; by host glycosylation is found at N905 and N982. A helical membrane pass occupies residues 1196-1220 (GMGVTYLALLAAFKVRPTFAAGLLL). Over 1221–1226 (RKLTSK) the chain is Cytoplasmic. A helical membrane pass occupies residues 1227–1245 (ELMMTTIGIVLLSQSTIPE). The Lumenal portion of the chain corresponds to 1246 to 1269 (TILELTDALALGMMVLKMVRKMEK). A helical transmembrane segment spans residues 1270-1290 (YQLAVTIMAILCVPNAVILQN). Residue A1291 is a topological domain, cytoplasmic. A helical transmembrane segment spans residues 1292–1310 (WKVSCTILAVVSVSPLFLT). At 1311–1317 (SSQQKAD) the chain is on the lumenal side. A helical transmembrane segment spans residues 1318–1338 (WIPLALTIKGLNPTAIFLTTL). At 1339–1346 (SRTNKKRS) the chain is on the cytoplasmic side. The helical transmembrane segment at 1347–1367 (WPLNEAIMAVGMVSILASSLL) threads the bilayer. The Lumenal segment spans residues 1368-1370 (KND). The chain crosses the membrane as a helical span at residues 1371–1391 (IPMTGPLVAGGLLTVCYVLTG). Topologically, residues 1392–1447 (RSADLELERAADVKWEDQAEISGSSPILSITISEDGSMSIKNEEEEQTLTILIRTG) are cytoplasmic. Positions 1398–1437 (LERAADVKWEDQAEISGSSPILSITISEDGSMSIKNEEEE) are interacts with and activates NS3 protease. The helical intramembrane region spans 1448–1468 (LLVISGLFPVSIPITAAAWYL). Topologically, residues 1469 to 2147 (WEVKKQRAGV…LSELPETLET (679 aa)) are cytoplasmic. The Peptidase S7 domain maps to 1476–1653 (AGVLWDVPSP…EKSIEDNPEI (178 aa)). Active-site charge relay system; for serine protease NS3 activity residues include H1526, D1550, and S1610. A Helicase ATP-binding domain is found at 1655-1811 (DDIFRKRKLT…QSNAPIMDEE (157 aa)). The tract at residues 1659–1662 (RKRK) is important for RNA-binding. Residue 1668-1675 (LHPGAGKT) coordinates ATP. Positions 1759-1762 (DEAH) match the DEAH box motif. Residues 1821–1988 (SGHEWVTDFK…IIPSMFEPER (168 aa)) enclose the Helicase C-terminal domain. K1863 carries the post-translational modification N6-acetyllysine; by host. The helical transmembrane segment at 2148-2168 (LLLLTLLATVTGGIFLFLMSG) threads the bilayer. The Lumenal portion of the chain corresponds to 2169 to 2170 (RG). An intramembrane region (helical) is located at residues 2171–2191 (IGKMTLGMCCIITASILLWYA). A topological domain (lumenal) is located at residue Q2192. A helical membrane pass occupies residues 2193–2213 (IQPHWIAASIILEFFLIVLLI). At 2214–2228 (PEPEKQRTPQDNQLT) the chain is on the cytoplasmic side. The helical transmembrane segment at 2229–2249 (YVVIAILTVVAATMANEMGFL) threads the bilayer. At 2250-2274 (EKTKKDLGLGSITTQQPESNILDID) the chain is on the lumenal side. An intramembrane region (helical) is located at residues 2275 to 2295 (LRPASAWTLYAVATTFVTPML). Residues 2296–2316 (RHSIENSSVNVSLTAIANQAT) are Lumenal-facing. 2 N-linked (GlcNAc...) asparagine; by host glycosylation sites follow: N2301 and N2305. An intramembrane region (helical) is located at residues 2317 to 2337 (VLMGLGKGWPLSKMDIGVPLL). Topologically, residues 2338 to 2347 (AIGCYSQVNP) are lumenal. A helical membrane pass occupies residues 2348-2368 (ITLTAALFLLVAHYAIIGPGL). Residues 2369 to 2413 (QAKATREAQKRAAAGIMKNPTVDGITVIDLDPIPYDPKFEKQLGQ) lie on the Cytoplasmic side of the membrane. Residues 2414–2434 (VMLLVLCVTQVLMMRTTWALC) traverse the membrane as a helical segment. The Lumenal portion of the chain corresponds to 2435-2459 (EALTLATGPISTLWEGNPGRFWNTT). N-linked (GlcNAc...) asparagine; by host glycosylation is present at N2457. A helical transmembrane segment spans residues 2460–2480 (IAVSMANIFRGSYLAGAGLLF). The Cytoplasmic portion of the chain corresponds to 2481-3391 (SIMKNTTNTR…KEEEEAGVLW (911 aa)). The region spanning 2493–2755 (TGNIGETLGE…DVDLGSGTRN (263 aa)) is the mRNA cap 0-1 NS5-type MT domain. S2547 serves as a coordination point for S-adenosyl-L-methionine. S2547 bears the Phosphoserine mark. Residue K2552 is the For 2'-O-MTase activity of the active site. Positions 2568–2571 (VVDL) match the SUMO-interacting motif motif. The S-adenosyl-L-methionine site is built by G2577, W2578, T2595, K2596, D2622, and V2623. D2637 acts as the For 2'-O-MTase activity in catalysis. I2638 serves as a coordination point for S-adenosyl-L-methionine. Catalysis depends on for 2'-O-MTase activity residues K2672 and E2708. Y2710 is an S-adenosyl-L-methionine binding site. Zn(2+)-binding residues include E2929, H2933, C2938, and C2941. Residues 3019 to 3168 (GAMYADDTAG…KPLDDRFASA (150 aa)) form the RdRp catalytic domain. Zn(2+) is bound by residues H3203, C3219, and C3338.

It in the N-terminal section; belongs to the class I-like SAM-binding methyltransferase superfamily. mRNA cap 0-1 NS5-type methyltransferase family. Homodimer. Interacts (via N-terminus) with host EXOC1 (via C-terminus); this interaction results in EXOC1 degradation through the proteasome degradation pathway. In terms of assembly, forms heterodimers with envelope protein E in the endoplasmic reticulum and Golgi. As to quaternary structure, homodimer; in the endoplasmic reticulum and Golgi. Interacts with protein prM. Interacts with non-structural protein 1. Homodimer; Homohexamer when secreted. Interacts with envelope protein E. Interacts with host PRKAA1. In terms of assembly, interacts (via N-terminus) with serine protease NS3. As to quaternary structure, forms a heterodimer with serine protease NS3. May form homooligomers. Forms a heterodimer with NS2B. Interacts with NS4B. Interacts with unphosphorylated RNA-directed RNA polymerase NS5; this interaction stimulates RNA-directed RNA polymerase NS5 guanylyltransferase activity. Interacts with host SHFL. In terms of assembly, interacts with host MAVS; this interaction inhibits the synthesis of IFN-beta. Interacts with host MAVS; this interaction inhibits the synthesis of IFN-beta. Interacts with host SHFL. Interacts with host AUP1; the interaction occurs in the presence of Dengue virus NS4B and induces lipophagy which facilitates production of virus progeny particles. May interact with host SRPRA and SEC61G. As to quaternary structure, interacts with serine protease NS. Homodimer. Interacts with host STAT2; this interaction inhibits the phosphorylation of the latter, and, when all viral proteins are present (polyprotein), targets STAT2 for degradation. Interacts with serine protease NS3. Interacts with host PAF1 complex; the interaction may prevent the recruitment of the PAF1 complex to interferon-responsive genes, and thus reduces the immune response. In terms of processing, specific enzymatic cleavages in vivo yield mature proteins. Cleavages in the lumen of endoplasmic reticulum are performed by host signal peptidase, whereas cleavages in the cytoplasmic side are performed by serine protease NS3. Signal cleavage at the 2K-4B site requires a prior NS3 protease-mediated cleavage at the 4A-2K site. Post-translationally, cleaved in post-Golgi vesicles by a host furin, releasing the mature small envelope protein M, and peptide pr. This cleavage is incomplete as up to 30% of viral particles still carry uncleaved prM. N-glycosylated. In terms of processing, N-glycosylated. The excreted form is glycosylated and this is required for efficient secretion of the protein from infected cells. Post-translationally, acetylated by host KAT5. Acetylation modulates NS3 RNA-binding and unwinding activities and plays an important positive role for viral replication. Sumoylation of RNA-directed RNA polymerase NS5 increases NS5 protein stability allowing proper viral RNA replication. In terms of processing, phosphorylated on serines residues. This phosphorylation may trigger NS5 nuclear localization.

Its subcellular location is the virion. The protein localises to the host nucleus. It is found in the host cytoplasm. The protein resides in the host perinuclear region. It localises to the secreted. Its subcellular location is the virion membrane. The protein localises to the host endoplasmic reticulum membrane. It is found in the host mitochondrion. It catalyses the reaction Selective hydrolysis of -Xaa-Xaa-|-Yaa- bonds in which each of the Xaa can be either Arg or Lys and Yaa can be either Ser or Ala.. It carries out the reaction RNA(n) + a ribonucleoside 5'-triphosphate = RNA(n+1) + diphosphate. The catalysed reaction is a ribonucleoside 5'-triphosphate + H2O = a ribonucleoside 5'-diphosphate + phosphate + H(+). The enzyme catalyses ATP + H2O = ADP + phosphate + H(+). It catalyses the reaction a 5'-end (5'-triphosphoguanosine)-ribonucleoside in mRNA + S-adenosyl-L-methionine = a 5'-end (N(7)-methyl 5'-triphosphoguanosine)-ribonucleoside in mRNA + S-adenosyl-L-homocysteine. It carries out the reaction a 5'-end (N(7)-methyl 5'-triphosphoguanosine)-ribonucleoside in mRNA + S-adenosyl-L-methionine = a 5'-end (N(7)-methyl 5'-triphosphoguanosine)-(2'-O-methyl-ribonucleoside) in mRNA + S-adenosyl-L-homocysteine + H(+). Its function is as follows. Plays a role in virus budding by binding to the cell membrane and gathering the viral RNA into a nucleocapsid that forms the core of a mature virus particle. During virus entry, may induce genome penetration into the host cytoplasm after hemifusion induced by the surface proteins. Can migrate to the cell nucleus where it modulates host functions. Overcomes the anti-viral effects of host EXOC1 by sequestering and degrading the latter through the proteasome degradation pathway. Functionally, inhibits RNA silencing by interfering with host Dicer. Prevents premature fusion activity of envelope proteins in trans-Golgi by binding to envelope protein E at pH6.0. After virion release in extracellular space, gets dissociated from E dimers. In terms of biological role, acts as a chaperone for envelope protein E during intracellular virion assembly by masking and inactivating envelope protein E fusion peptide. prM is the only viral peptide matured by host furin in the trans-Golgi network probably to avoid catastrophic activation of the viral fusion activity in acidic Golgi compartment prior to virion release. prM-E cleavage is inefficient, and many virions are only partially matured. These uncleaved prM would play a role in immune evasion. Its function is as follows. May play a role in virus budding. Exerts cytotoxic effects by activating a mitochondrial apoptotic pathway through M ectodomain. May display a viroporin activity. Functionally, binds to host cell surface receptor and mediates fusion between viral and cellular membranes. Envelope protein is synthesized in the endoplasmic reticulum in the form of heterodimer with protein prM. They play a role in virion budding in the ER, and the newly formed immature particle is covered with 60 spikes composed of heterodimer between precursor prM and envelope protein E. The virion is transported to the Golgi apparatus where the low pH causes dissociation of PrM-E heterodimers and formation of E homodimers. prM-E cleavage is inefficient, and many virions are only partially matured. These uncleaved prM would play a role in immune evasion. Involved in immune evasion, pathogenesis and viral replication. Once cleaved off the polyprotein, is targeted to three destinations: the viral replication cycle, the plasma membrane and the extracellular compartment. Essential for viral replication. Required for formation of the replication complex and recruitment of other non-structural proteins to the ER-derived membrane structures. Excreted as a hexameric lipoparticle that plays a role against host immune response. Antagonizing the complement function. Binds to the host macrophages and dendritic cells. Inhibits signal transduction originating from Toll-like receptor 3 (TLR3). Mediates complement activation, which may contribute to the pathogenesis of the vascular leakage that occurs in severe dengue disease. Activates autophagy through the AMPK/ERK/mTOR signaling pathway. Mechanistically, acts as the assembly platform for STK11-AMPK interactions and promotes STK11-AMPK interactions. In turn, promotes phosphorylation of the AMPK kinase structural domain and activates AMPK, thereby positively regulating the AMPK/ERK/mTOR signaling pathway and inducing autophagy. In terms of biological role, disrupts the host endothelial glycocalyx layer of host pulmonary microvascular endothelial cells, inducing degradation of sialic acid and shedding of heparan sulfate proteoglycans. NS1 induces expression of sialidases, heparanase, and activates cathepsin L, which activates heparanase via enzymatic cleavage. These effects are probably linked to the endothelial hyperpermeability observed in severe dengue disease. Its function is as follows. Component of the viral RNA replication complex that functions in virion assembly and antagonizes the host immune response. Functionally, required cofactor for the serine protease function of NS3. May have membrane-destabilizing activity and form viroporins. Displays three enzymatic activities: serine protease, NTPase and RNA helicase. NS3 serine protease, in association with NS2B, performs its autocleavage and cleaves the polyprotein at dibasic sites in the cytoplasm: C-prM, NS2A-NS2B, NS2B-NS3, NS3-NS4A, NS4A-2K and NS4B-NS5. NS3 RNA helicase binds RNA and unwinds dsRNA in the 3' to 5' direction. In terms of biological role, regulates the ATPase activity of the NS3 helicase activity. NS4A allows NS3 helicase to conserve energy during unwinding. Plays a role in the inhibition of the host innate immune response. Interacts with host MAVS and thereby prevents the interaction between RIGI and MAVS. In turn, IFN-beta production is impaired. Interacts with host AUP1 which mediates induction of lipophagy in host cells and facilitates production of virus progeny particles. Its function is as follows. Functions as a signal peptide for NS4B and is required for the interferon antagonism activity of the latter. Functionally, induces the formation of ER-derived membrane vesicles where the viral replication takes place. Inhibits interferon (IFN)-induced host STAT1 phosphorylation and nuclear translocation, thereby preventing the establishment of cellular antiviral state by blocking the IFN-alpha/beta pathway. Replicates the viral (+) and (-) RNA genome, and performs the capping of genomes in the cytoplasm. NS5 methylates viral RNA cap at guanine N-7 and ribose 2'-O positions. Besides its role in RNA genome replication, also prevents the establishment of cellular antiviral state by blocking the interferon-alpha/beta (IFN-alpha/beta) signaling pathway. Inhibits host TYK2 and STAT2 phosphorylation, thereby preventing activation of JAK-STAT signaling pathway. May reduce immune responses by preventing the recruitment of the host PAF1 complex to interferon-responsive genes. The protein is Genome polyprotein of Aedimorphus (Red guenon).